The chain runs to 830 residues: Periplasmic nitrate reductase 2 (830 aa).

The tat-type signal signal peptide spans 1-31; that stretch reads MKVSRRKFIKAQAVASAAAAAGISIPISASN. Positions 41–97 constitute a 4Fe-4S Mo/W bis-MGD-type domain; the sequence is ITWEKAPCRFCGTGCSVNVGTKEGKVVATHGDIKSPVNRGLNCVKGYFLSKIMYGKD. [4Fe-4S] cluster contacts are provided by cysteine 48, cysteine 51, cysteine 55, and cysteine 83. Mo-bis(molybdopterin guanine dinucleotide)-binding positions include lysine 85, glutamine 152, asparagine 177, cysteine 181, 245-249, 264-266, methionine 374, glutamine 378, asparagine 484, 510-511, lysine 533, aspartate 560, and 720-729; these read STFEH, QSD, SE, and TGRVIEHWHS. Tryptophan 796 provides a ligand contact to substrate. Residues asparagine 804 and lysine 821 each coordinate Mo-bis(molybdopterin guanine dinucleotide).

It belongs to the prokaryotic molybdopterin-containing oxidoreductase family. NasA/NapA/NarB subfamily. In terms of assembly, component of the periplasmic nitrate reductase NapAB complex composed of NapA and NapB. It depends on [4Fe-4S] cluster as a cofactor. Requires Mo-bis(molybdopterin guanine dinucleotide) as cofactor. Post-translationally, predicted to be exported by the Tat system. The position of the signal peptide cleavage has not been experimentally proven.

The protein resides in the periplasm. It catalyses the reaction 2 Fe(II)-[cytochrome] + nitrate + 2 H(+) = 2 Fe(III)-[cytochrome] + nitrite + H2O. Its function is as follows. Catalytic subunit of the periplasmic nitrate reductase complex NapAB. Receives electrons from NapB and catalyzes the reduction of nitrate to nitrite. The polypeptide is Periplasmic nitrate reductase 2 (Photobacterium profundum (strain SS9)).